A 326-amino-acid polypeptide reads, in one-letter code: MKKTLVALAILTAAGSANAGINLYDADGVKTDLSGAAEVQYRQTFKEDSDAELRMDDGDLAVNTTVAISDSLNAVAAVAFEFEDGKVTNDELWVGVAGDFGTLTAGRQYMLADDAGVGKDYELGGDGIDFVQANGDQVVKYVFDNGQFYGGVGALITETNPDNNADEASVYEGRLGARFGDFDVRAYLYSGEDVNTDNFDVFGDDKVNVDIDGYQIEAEYIVNAFAFAASFGQVDYELASDSSQKIEADTAALAGSYTMNKTTFAVGYTYWSPEAKGTVKKMEEANVFYANVTQQLHSNVKVYGEIGSSDTDNSEFGYVAGMEVTF.

The N-terminal stretch at 1–19 (MKKTLVALAILTAAGSANA) is a signal peptide.

The protein belongs to the Gram-negative porin family. As to quaternary structure, oligomer.

The protein resides in the cell outer membrane. In terms of biological role, forms pores that allow passive diffusion of small molecules across the outer membrane. The polypeptide is Porin-like protein H (ompH) (Photobacterium profundum (strain SS9)).